The primary structure comprises 126 residues: uncharacterized protein (126 aa).

This is an uncharacterized protein from Homo sapiens (Human).